Reading from the N-terminus, the 75-residue chain is uncharacterized protein (75 aa).

The SpoVT-AbrB domain occupies 3–45 (TTVFLSNRSQAVRLPKAVALPENVKRVEVIAVGRTRIITPAGE).

It belongs to the VapB family.

This is an uncharacterized protein from Escherichia coli (strain K12).